The chain runs to 65 residues: Precursor peptide TigB (65 aa).

TIGSVS motif repeat units follow at residues 16–21 (TIGSVS), 23–28 (TIGSVS), 33–38 (TIGSVS), 40–45 (TIGSVS), 47–52 (TIGSVS), and 54–59 (TIGSVS). 6 positions are modified to methylcyclopropylglycine: isoleucine 17, isoleucine 24, isoleucine 34, isoleucine 41, isoleucine 48, and isoleucine 55.

Is subject to maturation by TigE, that catalyzes the formation of methylcyclopropylglycine (mCPG) residues from isoleucine residues residing in the repeating TIGSVS motifs.

In terms of biological role, precursor peptide which undergoes post-translational modifications by tailoring enzymes, leading to the mature natural product. The protein is Precursor peptide TigB of Paramaledivibacter caminithermalis (strain DSM 15212 / CIP 107654 / DViRD3) (Clostridium caminithermale).